The primary structure comprises 278 residues: Undecaprenyl-diphosphatase (278 aa).

6 helical membrane-spanning segments follow: residues 44 to 64 (FLEM…MTIY), 84 to 104 (WQLW…AVPL), 112 to 132 (FNFM…FIWI), 187 to 207 (SVAA…YSGL), 224 to 244 (VWIL…VIRF), and 254 to 274 (FTVF…YAFI).

Belongs to the UppP family.

The protein resides in the cell membrane. It carries out the reaction di-trans,octa-cis-undecaprenyl diphosphate + H2O = di-trans,octa-cis-undecaprenyl phosphate + phosphate + H(+). Catalyzes the dephosphorylation of undecaprenyl diphosphate (UPP). Confers resistance to bacitracin. The chain is Undecaprenyl-diphosphatase from Streptococcus suis (strain 98HAH33).